A 320-amino-acid polypeptide reads, in one-letter code: Glyoxylate/hydroxypyruvate reductase B (320 aa).

Active-site residues include R233 and E262. Catalysis depends on H281, which acts as the Proton donor.

This sequence belongs to the D-isomer specific 2-hydroxyacid dehydrogenase family. GhrB subfamily. As to quaternary structure, homodimer.

The protein localises to the cytoplasm. It catalyses the reaction glycolate + NADP(+) = glyoxylate + NADPH + H(+). It carries out the reaction (R)-glycerate + NAD(+) = 3-hydroxypyruvate + NADH + H(+). The enzyme catalyses (R)-glycerate + NADP(+) = 3-hydroxypyruvate + NADPH + H(+). Catalyzes the NADPH-dependent reduction of glyoxylate and hydroxypyruvate into glycolate and glycerate, respectively. This chain is Glyoxylate/hydroxypyruvate reductase B, found in Pectobacterium atrosepticum (strain SCRI 1043 / ATCC BAA-672) (Erwinia carotovora subsp. atroseptica).